Reading from the N-terminus, the 341-residue chain is Ferrochelatase (341 aa).

Residues H189 and E293 each coordinate Fe cation.

The protein belongs to the ferrochelatase family.

It localises to the cytoplasm. The enzyme catalyses heme b + 2 H(+) = protoporphyrin IX + Fe(2+). Its pathway is porphyrin-containing compound metabolism; protoheme biosynthesis; protoheme from protoporphyrin-IX: step 1/1. In terms of biological role, catalyzes the ferrous insertion into protoporphyrin IX. The polypeptide is Ferrochelatase (Pseudomonas fluorescens (strain SBW25)).